The chain runs to 89 residues: Small ribosomal subunit protein uS15 (89 aa).

This sequence belongs to the universal ribosomal protein uS15 family. In terms of assembly, part of the 30S ribosomal subunit. Forms a bridge to the 50S subunit in the 70S ribosome, contacting the 23S rRNA.

One of the primary rRNA binding proteins, it binds directly to 16S rRNA where it helps nucleate assembly of the platform of the 30S subunit by binding and bridging several RNA helices of the 16S rRNA. In terms of biological role, forms an intersubunit bridge (bridge B4) with the 23S rRNA of the 50S subunit in the ribosome. This is Small ribosomal subunit protein uS15 from Chlamydia abortus (strain DSM 27085 / S26/3) (Chlamydophila abortus).